We begin with the raw amino-acid sequence, 457 residues long: MAGYLSESDFVMVEEGFSTRDLLEELTLGASQATTGKVAAFFVADAVVRKHFCFLKYLPRVRPFYAVRCNSSLGVLKVLAELGLGFSCASKAEMELVQHIGVPASKIICANPCKQVAQIKYAAKHGVRLLSFDNEVELAKVVKSHPSAKSWGEVLTLDALGLHHTHRRVGCSLMFQASVIASVAQGYLELVCQPFHIGSGCPDPQAYAQSIADARLVFQMGAELGHTMNILDLGGGFPGLEGAKVRFEEVTSVIGKNIPFYTPPPCHVPLRTHATKKMTSSDFCCRVHVTAKEKPLFSPFLTEQTGAAPKSIVYHLDEGVYGVFNSVLFDNTCPTPALQKKPSADQPLYSSSLWGPAVDGCDCVAEGLWLPQLQVGDWLVFDNMGAYTVDTKSLLGGTQACRVTYAMSRLAWEALQGQLLPAEEDQDAEGVCKPLSCGWEITDSLCVGPVFTPASIM.

The interval 115 to 138 is necessary for polyamine uptake stimulation; it reads QVAQIKYAAKHGVRLLSFDNEVEL.

It belongs to the Orn/Lys/Arg decarboxylase class-II family. ODC antizyme inhibitor subfamily. In terms of assembly, monomer. Interacts with OAZ1, OAZ2 and OAZ3; this interaction disrupts the interaction between the antizyme and ODC1. Does not form a heterodimer with ODC1. In terms of processing, ubiquitinated, leading to its proteasomal degradation; a process that is reduced in presence of antizymes. May also be degraded through the lysosomal degradative pathway in a proteasomal-independent manner.

It is found in the nucleus. It localises to the cytoplasm. Its subcellular location is the perinuclear region. The protein resides in the membrane. The protein localises to the cytoplasmic vesicle. It is found in the endoplasmic reticulum-Golgi intermediate compartment. It localises to the golgi apparatus. Its subcellular location is the cis-Golgi network. The protein resides in the trans-Golgi network. The protein localises to the cytoplasmic granule. It is found in the cell projection. It localises to the axon. Its subcellular location is the dendrite. The protein resides in the perikaryon. Its function is as follows. Antizyme inhibitor (AZI) protein that positively regulates ornithine decarboxylase (ODC) activity and polyamine uptake. AZI is an enzymatically inactive ODC homolog that counteracts the negative effect of ODC antizymes (AZs) OAZ1, OAZ2 and OAZ3 on ODC activity by competing with ODC for antizyme-binding. Inhibits antizyme-dependent ODC degradation and releases ODC monomers from their inactive complex with antizymes, leading to formation of the catalytically active ODC homodimer and restoring polyamine production. Participates in the morphological integrity of the trans-Golgi network (TGN) and functions as a regulator of intracellular secretory vesicle trafficking. The polypeptide is Antizyme inhibitor 2 (Azin2) (Rattus norvegicus (Rat)).